Reading from the N-terminus, the 530-residue chain is Autoinducer-2 kinase (530 aa).

This sequence belongs to the FGGY kinase family.

The protein localises to the cytoplasm. The enzyme catalyses (S)-4,5-dihydroxypentane-2,3-dione + ATP = (2S)-2-hydroxy-3,4-dioxopentyl phosphate + ADP + H(+). In terms of biological role, catalyzes the phosphorylation of autoinducer-2 (AI-2) to phospho-AI-2, which subsequently inactivates the transcriptional regulator LsrR and leads to the transcription of the lsr operon. Phosphorylates the ring-open form of (S)-4,5-dihydroxypentane-2,3-dione (DPD), which is the precursor to all AI-2 signaling molecules, at the C5 position. The protein is Autoinducer-2 kinase of Yersinia pseudotuberculosis serotype O:3 (strain YPIII).